The sequence spans 67 residues: ATP synthase F(0) complex subunit 8 (67 aa).

A helical membrane pass occupies residues 8 to 24 (TWLIMILSMILTLFITF). Position 54 is an N6-acetyllysine; alternate (lysine 54). At lysine 54 the chain carries N6-succinyllysine; alternate. The residue at position 57 (lysine 57) is an N6-acetyllysine.

This sequence belongs to the ATPase protein 8 family. Component of the ATP synthase complex composed at least of ATP5F1A/subunit alpha, ATP5F1B/subunit beta, ATP5MC1/subunit c (homooctomer), MT-ATP6/subunit a, MT-ATP8/subunit 8, ATP5ME/subunit e, ATP5MF/subunit f, ATP5MG/subunit g, ATP5MK/subunit k, ATP5MJ/subunit j, ATP5F1C/subunit gamma, ATP5F1D/subunit delta, ATP5F1E/subunit epsilon, ATP5PF/subunit F6, ATP5PB/subunit b, ATP5PD/subunit d, ATP5PO/subunit OSCP. ATP synthase complex consists of a soluble F(1) head domain (subunits alpha(3) and beta(3)) - the catalytic core - and a membrane F(0) domain - the membrane proton channel (subunits c, a, 8, e, f, g, k and j). These two domains are linked by a central stalk (subunits gamma, delta, and epsilon) rotating inside the F1 region and a stationary peripheral stalk (subunits F6, b, d, and OSCP). Interacts with PRICKLE3.

It localises to the mitochondrion membrane. Functionally, subunit 8, of the mitochondrial membrane ATP synthase complex (F(1)F(0) ATP synthase or Complex V) that produces ATP from ADP in the presence of a proton gradient across the membrane which is generated by electron transport complexes of the respiratory chain. ATP synthase complex consist of a soluble F(1) head domain - the catalytic core - and a membrane F(1) domain - the membrane proton channel. These two domains are linked by a central stalk rotating inside the F(1) region and a stationary peripheral stalk. During catalysis, ATP synthesis in the catalytic domain of F(1) is coupled via a rotary mechanism of the central stalk subunits to proton translocation. In vivo, can only synthesize ATP although its ATP hydrolase activity can be activated artificially in vitro. Part of the complex F(0) domain. This Phoca vitulina (Harbor seal) protein is ATP synthase F(0) complex subunit 8.